The sequence spans 309 residues: Dicarboxylate carrier UCP2 (309 aa).

Topologically, residues 1-16 are mitochondrial intermembrane; sequence MVGFKATDVPPTATVK. Solcar repeat units follow at residues 11–106, 114–203, and 212–297; these read PTAT…VKQF, AGIG…IKDT, and DDLP…LKRA. The interval 16 to 63 is important for interaction with long-chain fatty acids; that stretch reads KFLGAGTAACIADLITFPLDTAKVRLQIQGESQGLVRTAASAQYRGVL. Residues 17–40 form a helical membrane-spanning segment; it reads FLGAGTAACIADLITFPLDTAKVR. The Mitochondrial matrix portion of the chain corresponds to 41–77; that stretch reads LQIQGESQGLVRTAASAQYRGVLGTILTMVRTEGPRS. A helical membrane pass occupies residues 78-103; the sequence is LYNGLVAGLQRQMSFASVRIGLYDSV. Residues 104 to 119 are Mitochondrial intermembrane-facing; it reads KQFYTKGSEHAGIGSR. Residues 120–145 form a helical membrane-spanning segment; sequence LLAGSTTGALAVAVAQPTDVVKVRFQ. The Mitochondrial matrix portion of the chain corresponds to 146–173; that stretch reads AQARAGGGRRYQSTVEAYKTIAREEGIR. The helical transmembrane segment at 174-199 threads the bilayer; it reads GLWKGTSPNVARNAIVNCAELVTYDL. Residues 200–217 lie on the Mitochondrial intermembrane side of the membrane; the sequence is IKDTLLKANLMTDDLPCH. Residues 218 to 242 form a helical membrane-spanning segment; the sequence is FTSAFGAGFCTTVIASPVDVVKTRY. At 243–268 the chain is on the mitochondrial matrix side; sequence MNSALGQYHSAGHCALTMLRKEGPRA. A helical transmembrane segment spans residues 269 to 294; it reads FYKGFMPSFLRLGSWNVVMFVTYEQL. An important for interaction with long-chain fatty acids region spans residues 278–285; it reads LRLGSWNV. At 295–309 the chain is on the mitochondrial intermembrane side; sequence KRALMAAYQSREAPF.

This sequence belongs to the mitochondrial carrier (TC 2.A.29) family. As to quaternary structure, homotetramer. Adopts an asymmetrical dimer of dimers functional form. Interacts with MICU1 (when methylated); leading to decrease the calcium sensitivity of MICU1. As to expression, widely expressed. Highest in spleen, lung, white and brown adipose tissues. 4-6 times higher levels are detected in white adipose tissue of ob/ob and db/db mice when compared to lean littermates. Expressed in neurons of the ventromedial nucleus of the hypothalamus (at protein level). Expressed in thymocytes (at protein level).

The protein localises to the mitochondrion inner membrane. It catalyses the reaction L-aspartate(out) + phosphate(in) + H(+)(in) = L-aspartate(in) + phosphate(out) + H(+)(out). It carries out the reaction oxaloacetate(out) + phosphate(in) + H(+)(in) = oxaloacetate(in) + phosphate(out) + H(+)(out). The enzyme catalyses (S)-malate(out) + phosphate(in) + H(+)(in) = (S)-malate(in) + phosphate(out) + H(+)(out). The catalysed reaction is malonate(out) + phosphate(in) + H(+)(in) = malonate(in) + phosphate(out) + H(+)(out). It catalyses the reaction sulfate(out) + phosphate(in) + H(+)(in) = sulfate(in) + phosphate(out) + H(+)(out). It carries out the reaction (S)-malate(out) = (S)-malate(in). The enzyme catalyses L-aspartate(out) = L-aspartate(in). The catalysed reaction is phosphate(in) = phosphate(out). It catalyses the reaction chloride(in) = chloride(out). It carries out the reaction H(+)(in) = H(+)(out). The enzyme catalyses a long-chain fatty acid(out) = a long-chain fatty acid(in). Its activity is regulated as follows. Proton conductance is activated by free long-chain fatty acids and allosterically inhibited by purine nucleotides. Could be constitutively inhibited by GDP. Functionally, antiporter that exports dicarboxylate intermediates of the Krebs cycle in exchange for phosphate plus a proton across the inner membrane of mitochondria, a process driven by mitochondrial motive force with an overall impact on glycolysis, glutaminolysis and glutathione-dependent redox balance. Continuous export of oxaloacetate and related four-carbon dicarboxylates from mitochondrial matrix into the cytosol negatively regulates the oxidation of acetyl-CoA substrates via the Krebs cycle lowering the ATP/ADP ratio and reactive oxygen species (ROS) production. May mediate inducible proton entry into the mitochondrial matrix affecting ATP turnover as a protection mechanism against oxidative stress. The proton currents are most likely associated with fatty acid flipping across the inner membrane of mitochondria in a metabolic process regulated by free fatty acids and purine nucleotides. Regulates the use of glucose as a source of energy. Required for glucose-induced DRP1-dependent mitochondrial fission and neuron activation in the ventromedial nucleus of the hypothalamus (VMH). This mitochondrial adaptation mechanism modulates the VMH pool of glucose-excited neurons with an impact on systemic glucose homeostasis. Regulates ROS levels and metabolic reprogramming of macrophages during the resolution phase of inflammation. Attenuates ROS production in response to IL33 to preserve the integrity of the Krebs cycle required for persistent production of itaconate and subsequent GATA3-dependent differentiation of inflammation-resolving alternatively activated macrophages. Can unidirectionally transport anions including L-malate, L-aspartate, phosphate and chloride ions. Does not mediate adaptive thermogenesis. This Mus musculus (Mouse) protein is Dicarboxylate carrier UCP2 (Ucp2).